A 141-amino-acid chain; its full sequence is HTH-type transcriptional repressor NsrR (141 aa).

Positions 2-129 (QLTSFTDYAL…DDCTIEELLS (128 aa)) constitute an HTH rrf2-type domain. The segment at residues 28 to 51 (ITEVTDLFGVSRNHMVKVINRLGQ) is a DNA-binding region (H-T-H motif). 3 residues coordinate [2Fe-2S] cluster: cysteine 91, cysteine 96, and cysteine 102.

The cofactor is [2Fe-2S] cluster.

Functionally, nitric oxide-sensitive repressor of genes involved in protecting the cell against nitrosative stress. May require iron for activity. This is HTH-type transcriptional repressor NsrR from Vibrio campbellii (strain ATCC BAA-1116).